The sequence spans 309 residues: MATSTTLQSLLMKEDEEQRNKRRTTSTMFLKKDDEERINWVDLPPELTTSILLRLSVTDILDNARKLCRAWRRICKDPSMWRKINLRDCLMYEFDFESMCRHIVDLSQGGLLEINIEHFVSDSLLSYIVDRSCNLKSLGISIYEPMTNKGVMNGIEKLPLLETLVIFHSSIKLDLKAIGHACPQLKTLKLNSLGSELAHDISQVGYIPLLECDDDALAIAESMPKLRHLQLMGNGLTNTGLNAILDGCPHLEEHLDVRKCFNINLVGNLEKRCMKRIKELRRPHDSTADYPYSISVSMVVQMMITSRYH.

A disordered region spans residues 1-26 (MATSTTLQSLLMKEDEEQRNKRRTTS). The region spanning 37 to 84 (RINWVDLPPELTTSILLRLSVTDILDNARKLCRAWRRICKDPSMWRKI) is the F-box domain.

This is Putative F-box protein At4g05475 from Arabidopsis thaliana (Mouse-ear cress).